Reading from the N-terminus, the 700-residue chain is Elongation factor G 1 (700 aa).

The region spanning 8 to 290 (ERYRNIGISA…AVIDYLPSPA (283 aa)) is the tr-type G domain. Residues 17-24 (AHIDAGKT), 88-92 (DTPGH), and 142-145 (NKMD) contribute to the GTP site.

This sequence belongs to the TRAFAC class translation factor GTPase superfamily. Classic translation factor GTPase family. EF-G/EF-2 subfamily.

It is found in the cytoplasm. In terms of biological role, catalyzes the GTP-dependent ribosomal translocation step during translation elongation. During this step, the ribosome changes from the pre-translocational (PRE) to the post-translocational (POST) state as the newly formed A-site-bound peptidyl-tRNA and P-site-bound deacylated tRNA move to the P and E sites, respectively. Catalyzes the coordinated movement of the two tRNA molecules, the mRNA and conformational changes in the ribosome. The chain is Elongation factor G 1 from Bordetella parapertussis (strain 12822 / ATCC BAA-587 / NCTC 13253).